Consider the following 339-residue polypeptide: Ketol-acid reductoisomerase (NADP(+)) (339 aa).

Positions 1–182 constitute a KARI N-terminal Rossmann domain; that stretch reads MRVYYDRDAD…GGGRAGIIET (182 aa). Residues 24–27, Arg48, Ser51, Thr53, and 83–86 contribute to the NADP(+) site; these read YGSQ and DELQ. Residue His108 is part of the active site. Gly134 lines the NADP(+) pocket. The region spanning 183 to 328 is the KARI C-terminal knotted domain; it reads TFREECETDL…AKLRAMMPWI (146 aa). The Mg(2+) site is built by Asp191, Glu195, Glu227, and Glu231. Residue Ser252 participates in substrate binding.

It belongs to the ketol-acid reductoisomerase family. The cofactor is Mg(2+).

The enzyme catalyses (2R)-2,3-dihydroxy-3-methylbutanoate + NADP(+) = (2S)-2-acetolactate + NADPH + H(+). It catalyses the reaction (2R,3R)-2,3-dihydroxy-3-methylpentanoate + NADP(+) = (S)-2-ethyl-2-hydroxy-3-oxobutanoate + NADPH + H(+). The protein operates within amino-acid biosynthesis; L-isoleucine biosynthesis; L-isoleucine from 2-oxobutanoate: step 2/4. It functions in the pathway amino-acid biosynthesis; L-valine biosynthesis; L-valine from pyruvate: step 2/4. Functionally, involved in the biosynthesis of branched-chain amino acids (BCAA). Catalyzes an alkyl-migration followed by a ketol-acid reduction of (S)-2-acetolactate (S2AL) to yield (R)-2,3-dihydroxy-isovalerate. In the isomerase reaction, S2AL is rearranged via a Mg-dependent methyl migration to produce 3-hydroxy-3-methyl-2-ketobutyrate (HMKB). In the reductase reaction, this 2-ketoacid undergoes a metal-dependent reduction by NADPH to yield (R)-2,3-dihydroxy-isovalerate. This chain is Ketol-acid reductoisomerase (NADP(+)), found in Methylocella silvestris (strain DSM 15510 / CIP 108128 / LMG 27833 / NCIMB 13906 / BL2).